The primary structure comprises 71 residues: Disintegrin applaggin (71 aa).

In terms of domain architecture, Disintegrin spans 1–71 (EAGEECDCGS…SAGCPRNPFH (71 aa)). Disulfide bonds link Cys-6/Cys-21, Cys-8/Cys-16, Cys-15/Cys-38, Cys-29/Cys-35, Cys-34/Cys-58, and Cys-47/Cys-65. Positions 50–52 (RGD) match the Cell attachment site motif.

The protein belongs to the venom metalloproteinase (M12B) family. P-II subfamily. P-IIa sub-subfamily. Monomer (disintegrin). As to expression, expressed by the venom gland.

Its subcellular location is the secreted. Inhibits fibrinogen interaction with platelets. Acts by binding to alpha-IIb/beta-3 (ITGA2B/ITGB3) on the platelet surface and inhibits aggregation induced by ADP, thrombin, platelet-activating factor and collagen. The sequence is that of Disintegrin applaggin from Agkistrodon piscivorus piscivorus (Eastern cottonmouth).